The chain runs to 346 residues: Short-chain dehydrogenase/reductase bet4 (346 aa).

Residues 1–35 form a disordered region; that stretch reads MTPAKAPSHAKKPEAGSQPISSMWTQMFPPKPTYT. V56, K80, D105, and N132 together coordinate NADP(+). S191 functions as the Proton donor in the catalytic mechanism. NADP(+) is bound by residues Y222 and K226. The Proton acceptor role is filled by Y222. K226 functions as the Lowers pKa of active site Tyr in the catalytic mechanism.

This sequence belongs to the short-chain dehydrogenases/reductases (SDR) family.

It catalyses the reaction dehydroprobetaenone I + AH2 = probetaenone I + A. It participates in mycotoxin biosynthesis. Its function is as follows. Short-chain dehydrogenase/reductase; part of the gene cluster that mediates the biosynthesis of betaenones, phytotoxic polyketides involved in leaf spot disease in sugar beets. The first step of the pathway is the synthesis of dehydroprobetaenone I by the polyketide synthase bet1 and the enoyl reductase bet3 via condensation of one acetyl-CoA starter unit with 7 malonyl-CoA units and 5 methylations. The C-terminal reductase (R) domain of bet1 catalyzes the reductive release of the polyketide chain. Because bet1 lacks a designated enoylreductase (ER) domain, the required activity is provided the enoyl reductase bet3. The short-chain dehydrogenase/reductase bet4 then catalyzes reduction of dehydroprobetaenone I to probetaenone I. The cytochrome P450 monooxygenase bet2 catalyzes successive epoxidation, oxidation (resulting from epoxide opening) and hydroxylation to install a tertiary alcohol in the decaline ring to yield betaenone C from dehydroprobetaenone I and betaenone B from probetaenone I. The FAD-linked oxidoreductase (orf1) is probably responsible for the conversion of betaenone C to betaenone A via an intramolecular aldol reaction between C-1 and C-17 to form the bridged tricyclic system in betaenone A. The protein is Short-chain dehydrogenase/reductase bet4 of Neocamarosporium betae (Beet black rot fungus).